Reading from the N-terminus, the 364-residue chain is 2-oxoadipate dioxygenase/decarboxylase, chloroplastic/amyloplastic (364 aa).

Residues 1–49 (MAVALAGARSPGAGAILSLRRLAPAAAAPVRLGGSGTPGTRRRRGIAMA) constitute a chloroplast transit peptide. Positions 107 and 111 each coordinate 2-oxoadipate. His-107 is a binding site for Fe(2+). His-243 contacts Fe(2+). Residues Gln-289 and Tyr-313 each contribute to the 2-oxoadipate site. Position 315 (Glu-315) interacts with Fe(2+).

It belongs to the 2-oxoadipate dioxygenase/decarboxylase family. The cofactor is Fe(2+). Expressed in roots, stems, leaf sheaths, leaf blades, panicles, and endosperm.

It is found in the plastid. Its subcellular location is the chloroplast. The protein resides in the amyloplast. It carries out the reaction 2-oxoadipate + O2 = (R)-2-hydroxyglutarate + CO2. The protein operates within amino-acid degradation. Functionally, catalyzes the decarboxylation and hydroxylation of 2-oxoadipate (2OA) to form D-2-hydroxyglutarate (D-2-HGA). Is involved in a D-lysine catabolic pathway. Involved in the regulation of starch synthesis and amyloplast development within the peripheral endosperm during the grain-filling stage. This is 2-oxoadipate dioxygenase/decarboxylase, chloroplastic/amyloplastic from Oryza sativa subsp. japonica (Rice).